The sequence spans 590 residues: Ankyrin repeat-containing protein ITN1 (590 aa).

Residues 25–44 (ENQNPMIDPSPTPSPSATAT) form a disordered region. 7 ANK repeats span residues 73–102 (HNDTELHLAAQRGDLAAVQQILKDINSQME), 128–157 (LGETALFTAADKGHLDVVKELLKYSSRESI), 163–192 (SGYDPLHIAAIQGHHAIVEVLLDHDATLSQ), 197–226 (SNATPLVSAAMRGHTEVVNQLLSKAGNLLE), 231–260 (NNKNALHLAARQGHVEVIKALLSKDPQLAR), 265–294 (KGQTALHMAVKGQSSEVVKLLLDADPAIVM), and 299–329 (SCNTALHVATRKKRAEIVELLLSLPDTNANT). Helical transmembrane passes span 422–442 (VTVVAVLFATVAFAAIFTVPG), 460–480 (IFFIFNALALFTSLAVVVVQI), 500–520 (LMWLASMCTSVAFLASSYIVV), and 531–551 (VTVVGGVIMAGVLGTMTYYVV).

In terms of assembly, interacts with REM19/RTV1. In terms of tissue distribution, expressed in roots, shoots, leaf vasculature and stems.

The protein resides in the cell membrane. Its function is as follows. Involved in salt stress tolerance. May act through abscisic acid (ABA) signaling pathways and promote reactive oxygen species (ROS) production. The protein is Ankyrin repeat-containing protein ITN1 of Arabidopsis thaliana (Mouse-ear cress).